The chain runs to 280 residues: Formamidopyrimidine-DNA glycosylase (280 aa).

The Schiff-base intermediate with DNA role is filled by Pro-2. The Proton donor role is filled by Glu-3. Lys-53 functions as the Proton donor; for beta-elimination activity in the catalytic mechanism. 3 residues coordinate DNA: His-91, Arg-110, and Arg-152. An FPG-type zinc finger spans residues His-239 to Pro-273. Arg-263 functions as the Proton donor; for delta-elimination activity in the catalytic mechanism.

It belongs to the FPG family. As to quaternary structure, monomer. It depends on Zn(2+) as a cofactor.

It catalyses the reaction Hydrolysis of DNA containing ring-opened 7-methylguanine residues, releasing 2,6-diamino-4-hydroxy-5-(N-methyl)formamidopyrimidine.. The catalysed reaction is 2'-deoxyribonucleotide-(2'-deoxyribose 5'-phosphate)-2'-deoxyribonucleotide-DNA = a 3'-end 2'-deoxyribonucleotide-(2,3-dehydro-2,3-deoxyribose 5'-phosphate)-DNA + a 5'-end 5'-phospho-2'-deoxyribonucleoside-DNA + H(+). Functionally, involved in base excision repair of DNA damaged by oxidation or by mutagenic agents. Acts as a DNA glycosylase that recognizes and removes damaged bases. Has a preference for oxidized purines, such as 7,8-dihydro-8-oxoguanine (8-oxoG). Has AP (apurinic/apyrimidinic) lyase activity and introduces nicks in the DNA strand. Cleaves the DNA backbone by beta-delta elimination to generate a single-strand break at the site of the removed base with both 3'- and 5'-phosphates. The chain is Formamidopyrimidine-DNA glycosylase (mutM) from Deinococcus radiodurans (strain ATCC 13939 / DSM 20539 / JCM 16871 / CCUG 27074 / LMG 4051 / NBRC 15346 / NCIMB 9279 / VKM B-1422 / R1).